The sequence spans 179 residues: Hypoxanthine-guanine phosphoribosyltransferase (179 aa).

2 residues coordinate diphosphate: lysine 42 and glycine 43. Positions 98 and 99 each coordinate Mg(2+). Glutamate 102 acts as the Proton acceptor in catalysis. Residues lysine 130, 151 to 152 (FV), and aspartate 158 each bind GMP. Residue arginine 164 participates in diphosphate binding.

This sequence belongs to the purine/pyrimidine phosphoribosyltransferase family. Requires Mg(2+) as cofactor.

It is found in the cytoplasm. It carries out the reaction IMP + diphosphate = hypoxanthine + 5-phospho-alpha-D-ribose 1-diphosphate. The enzyme catalyses GMP + diphosphate = guanine + 5-phospho-alpha-D-ribose 1-diphosphate. Its pathway is purine metabolism; IMP biosynthesis via salvage pathway; IMP from hypoxanthine: step 1/1. The protein operates within purine metabolism; GMP biosynthesis via salvage pathway; GMP from guanine: step 1/1. In terms of biological role, purine salvage pathway enzyme that catalyzes the transfer of the ribosyl-5-phosphate group from 5-phospho-alpha-D-ribose 1-diphosphate (PRPP) to the N9 position of the 6-oxopurines hypoxanthine and guanine to form the corresponding ribonucleotides IMP (inosine 5'-monophosphate) and GMP (guanosine 5'-monophosphate), with the release of PPi. This is Hypoxanthine-guanine phosphoribosyltransferase (hpt) from Staphylococcus aureus (strain COL).